We begin with the raw amino-acid sequence, 388 residues long: Chorismate synthase (388 aa).

The NADP(+) site is built by R39 and R45. FMN is bound by residues 132–134 (RSS), 251–252 (NA), G296, 311–315 (KPIPT), and R337.

It belongs to the chorismate synthase family. In terms of assembly, homotetramer. The cofactor is FMNH2.

The catalysed reaction is 5-O-(1-carboxyvinyl)-3-phosphoshikimate = chorismate + phosphate. Its pathway is metabolic intermediate biosynthesis; chorismate biosynthesis; chorismate from D-erythrose 4-phosphate and phosphoenolpyruvate: step 7/7. In terms of biological role, catalyzes the anti-1,4-elimination of the C-3 phosphate and the C-6 proR hydrogen from 5-enolpyruvylshikimate-3-phosphate (EPSP) to yield chorismate, which is the branch point compound that serves as the starting substrate for the three terminal pathways of aromatic amino acid biosynthesis. This reaction introduces a second double bond into the aromatic ring system. This chain is Chorismate synthase, found in Staphylococcus aureus (strain bovine RF122 / ET3-1).